A 499-amino-acid polypeptide reads, in one-letter code: Bifunctional purine biosynthesis protein PurH (499 aa).

The MGS-like domain maps to 1-144 (MIKRALISVF…KNFKDVVVLT (144 aa)).

This sequence belongs to the PurH family.

The catalysed reaction is (6R)-10-formyltetrahydrofolate + 5-amino-1-(5-phospho-beta-D-ribosyl)imidazole-4-carboxamide = 5-formamido-1-(5-phospho-D-ribosyl)imidazole-4-carboxamide + (6S)-5,6,7,8-tetrahydrofolate. It carries out the reaction IMP + H2O = 5-formamido-1-(5-phospho-D-ribosyl)imidazole-4-carboxamide. The protein operates within purine metabolism; IMP biosynthesis via de novo pathway; 5-formamido-1-(5-phospho-D-ribosyl)imidazole-4-carboxamide from 5-amino-1-(5-phospho-D-ribosyl)imidazole-4-carboxamide (10-formyl THF route): step 1/1. Its pathway is purine metabolism; IMP biosynthesis via de novo pathway; IMP from 5-formamido-1-(5-phospho-D-ribosyl)imidazole-4-carboxamide: step 1/1. The polypeptide is Bifunctional purine biosynthesis protein PurH (Clostridium botulinum (strain 657 / Type Ba4)).